A 271-amino-acid chain; its full sequence is MLKIADTTFTSRLFTGTGKFSSPELMLEALRASGSQLITMAMKRVDLQSGNDAILAPLRQLGVRLLPNTSGAKTAEEAIFAARLAREALNTHWVKLEIHPDVRYLLPDPIETLKAAEVLVKEGFVVLPYCGADPVLCKRLEEVGCAAVMPLGSPIGSNLGLRTRDFLQIIIEQSKVPVVVDAGIGAPSHALEALELGADAVLVNTAIAVAHSPVQMAHAFRLAVESGERARLAGLGASPFNPSQPDTLQLRATATSPLTGFLSQLEEQEHV.

The Schiff-base intermediate with DXP role is filled by Lys-95. 1-deoxy-D-xylulose 5-phosphate-binding positions include Gly-156, 182-183 (AG), and 204-205 (NT).

It belongs to the ThiG family. Homotetramer. Forms heterodimers with either ThiH or ThiS.

Its subcellular location is the cytoplasm. It carries out the reaction [ThiS sulfur-carrier protein]-C-terminal-Gly-aminoethanethioate + 2-iminoacetate + 1-deoxy-D-xylulose 5-phosphate = [ThiS sulfur-carrier protein]-C-terminal Gly-Gly + 2-[(2R,5Z)-2-carboxy-4-methylthiazol-5(2H)-ylidene]ethyl phosphate + 2 H2O + H(+). Its pathway is cofactor biosynthesis; thiamine diphosphate biosynthesis. In terms of biological role, catalyzes the rearrangement of 1-deoxy-D-xylulose 5-phosphate (DXP) to produce the thiazole phosphate moiety of thiamine. Sulfur is provided by the thiocarboxylate moiety of the carrier protein ThiS. In vitro, sulfur can be provided by H(2)S. The sequence is that of Thiazole synthase from Yersinia pseudotuberculosis serotype O:3 (strain YPIII).